The following is a 498-amino-acid chain: ATP synthase subunit beta, chloroplastic (498 aa).

172 to 179 (GGAGVGKT) is an ATP binding site.

Belongs to the ATPase alpha/beta chains family. In terms of assembly, F-type ATPases have 2 components, CF(1) - the catalytic core - and CF(0) - the membrane proton channel. CF(1) has five subunits: alpha(3), beta(3), gamma(1), delta(1), epsilon(1). CF(0) has four main subunits: a(1), b(1), b'(1) and c(9-12).

It is found in the plastid. Its subcellular location is the chloroplast thylakoid membrane. The enzyme catalyses ATP + H2O + 4 H(+)(in) = ADP + phosphate + 5 H(+)(out). In terms of biological role, produces ATP from ADP in the presence of a proton gradient across the membrane. The catalytic sites are hosted primarily by the beta subunits. The protein is ATP synthase subunit beta, chloroplastic of Cinnamomum camphora (Camphor tree).